The chain runs to 417 residues: Biofilm dispersion protein BdlA (417 aa).

The 66-residue stretch at 1–66 (MAALDRSMAR…RRFWERLRRG (66 aa)) folds into the PAS 1 domain. The region spanning 67–114 (EHFSGRCKRITREGRPLWLEATYNPVRDGQGRLLKVVKYASDIDAIVH) is the PAC 1 domain. In terms of domain architecture, PAS 2 spans 115-188 (QEHEMQSKLD…ADLWRRLNRG (74 aa)). The region spanning 191-241 (VTGQFRRVHRNGQPVWLEASYNPVYDADGKLYKVVKFASDVSDRMRRYQAE) is the PAC 2 domain. The Methyl-accepting transducer domain maps to 242 to 417 (ADNAHQAHTL…QFSRTLNADL (176 aa)).

Its function is as follows. Essential for biofilm dispersion by sensing environmental cues. May be involved in sensing and transducing signals within cells, resulting in the modulation of c-di-GMP levels, swimming motility and adhesiveness of the bacterial cell surface. The polypeptide is Biofilm dispersion protein BdlA (bdlA) (Pseudomonas aeruginosa (strain ATCC 15692 / DSM 22644 / CIP 104116 / JCM 14847 / LMG 12228 / 1C / PRS 101 / PAO1)).